Reading from the N-terminus, the 525-residue chain is GMP synthase [glutamine-hydrolyzing] (525 aa).

Residues 8-206 (PLLILDFGSQ…VVDICKASTD (199 aa)) enclose the Glutamine amidotransferase type-1 domain. Catalysis depends on Cys85, which acts as the Nucleophile. Active-site residues include His180 and Glu182. Residues 207 to 400 (WTPEHIIDEA…LGLPHDMVYR (194 aa)) enclose the GMPS ATP-PPase domain. 234-240 (SGGVDSS) is an ATP binding site.

As to quaternary structure, homodimer.

The catalysed reaction is XMP + L-glutamine + ATP + H2O = GMP + L-glutamate + AMP + diphosphate + 2 H(+). It functions in the pathway purine metabolism; GMP biosynthesis; GMP from XMP (L-Gln route): step 1/1. In terms of biological role, catalyzes the synthesis of GMP from XMP. The sequence is that of GMP synthase [glutamine-hydrolyzing] from Legionella pneumophila (strain Lens).